A 484-amino-acid chain; its full sequence is Serine/threonine-protein kinase RIO1 (484 aa).

One can recognise a Protein kinase domain in the interval 76–402; sequence ADLNGCLSTG…EFDNADHECS (327 aa). Lysine 125 and leucine 198 together coordinate ATP. The active-site Proton acceptor is aspartate 244. The Mg(2+) site is built by asparagine 249 and aspartate 261. Aspartate 261 acts as the 4-aspartylphosphate intermediate in catalysis. The interval 398-484 is disordered; the sequence is DHECSSGTEE…KLVKKTKSKK (87 aa). Residues serine 402, serine 403, serine 409, serine 416, serine 417, and serine 419 each carry the phosphoserine; by CK2 modification. The interval 403-484 is interaction with CKA2; the sequence is SGTEEFSDDE…KLVKKTKSKK (82 aa). Residues 407–434 show a composition bias toward acidic residues; the sequence is EFSDDEEDGSSGSEEDDEEEGEYYDDDE. An association with (pre-)40S ribosomal subunit region spans residues 440–484; that stretch reads GKKHEDKDLKKLRKQEAKDAKREKRKTKVKKHIKKKLVKKTKSKK. Over residues 442–461 the composition is skewed to basic and acidic residues; it reads KHEDKDLKKLRKQEAKDAKR. Residues 462–484 are compositionally biased toward basic residues; the sequence is EKRKTKVKKHIKKKLVKKTKSKK.

Belongs to the protein kinase superfamily. RIO-type Ser/Thr kinase family. Interacts with CKA2. Mg(2+) is required as a cofactor. Post-translationally, autophosphorylated. Phosphorylated by casein kinase II (CK2). Phosphorylation by CK2 stimulates RIO1 kinase activity and targets it for degradation at the G1/S transition of the cell cycle.

The protein resides in the cytoplasm. It catalyses the reaction L-seryl-[protein] + ATP = O-phospho-L-seryl-[protein] + ADP + H(+). It carries out the reaction L-threonyl-[protein] + ATP = O-phospho-L-threonyl-[protein] + ADP + H(+). The catalysed reaction is ATP + H2O = ADP + phosphate + H(+). In terms of biological role, required for the final endonucleolytic cleavage at site D converting 20S pre-rRNA into the mature 18S rRNA. Required for the final steps of cytoplasmic maturation of the 40S ribosomal subunit. The association with the very late 40S subunit intermediate seems to follow RIO2 association with precursors of the 40S subunit and may involve a translation-like checkpoint point cycle preceeding the binding to the 60S ribosomal subunit. Despite the protein kinase domain is proposed to act predominantly as an ATPase. The catalytic activity regulates its dynamic association with the 40S subunit. Has a role in the cell cycle where it is required for entrance into S-phase and in the control of the onset of anaphase. Appears to also be involved in the maintenance of chromosome stability and correct mitotic segregation. This is Serine/threonine-protein kinase RIO1 (RIO1) from Saccharomyces cerevisiae (strain ATCC 204508 / S288c) (Baker's yeast).